A 159-amino-acid chain; its full sequence is Cyclic pyranopterin monophosphate synthase (159 aa).

Residues 75-77 and 113-114 contribute to the substrate site; these read LCH and ME. The active site involves Asp128.

It belongs to the MoaC family. As to quaternary structure, homohexamer; trimer of dimers.

The catalysed reaction is (8S)-3',8-cyclo-7,8-dihydroguanosine 5'-triphosphate = cyclic pyranopterin phosphate + diphosphate. Its pathway is cofactor biosynthesis; molybdopterin biosynthesis. Functionally, catalyzes the conversion of (8S)-3',8-cyclo-7,8-dihydroguanosine 5'-triphosphate to cyclic pyranopterin monophosphate (cPMP). This is Cyclic pyranopterin monophosphate synthase from Cereibacter sphaeroides (strain ATCC 17023 / DSM 158 / JCM 6121 / CCUG 31486 / LMG 2827 / NBRC 12203 / NCIMB 8253 / ATH 2.4.1.) (Rhodobacter sphaeroides).